A 231-amino-acid polypeptide reads, in one-letter code: Orotidine 5'-phosphate decarboxylase (231 aa).

Substrate contacts are provided by residues Asp-9, Lys-34, 62 to 71 (DLKLHDIPSV), Thr-117, Arg-179, Gln-188, Gly-208, and Arg-209. Lys-64 acts as the Proton donor in catalysis.

Belongs to the OMP decarboxylase family. Type 1 subfamily. As to quaternary structure, homodimer.

The catalysed reaction is orotidine 5'-phosphate + H(+) = UMP + CO2. The protein operates within pyrimidine metabolism; UMP biosynthesis via de novo pathway; UMP from orotate: step 2/2. Catalyzes the decarboxylation of orotidine 5'-monophosphate (OMP) to uridine 5'-monophosphate (UMP). This Aquifex aeolicus (strain VF5) protein is Orotidine 5'-phosphate decarboxylase.